The following is a 349-amino-acid chain: E3 ubiquitin-protein ligase SINA-like 10 (349 aa).

The tract at residues 1–77 (MARFSVCGGD…STSDDSDREV (77 aa)) is disordered. An RING-type; degenerate zinc finger spans residues 113–149 (CPICCEPLKIPIFQCDNGHLACTLCCTKVRNRCPSCT). The segment at 163–344 (VIEASRVSCL…NLQIWIGHGR (182 aa)) is SBD. Residues 166 to 224 (ASRVSCLNAKYGCKESTSYGNRFSHEQVCVFTPCSCPILDCHYTGYYKDLNNHVRAEHK) form an SIAH-type zinc finger. 8 residues coordinate Zn(2+): Cys171, Cys178, His190, Cys194, Cys201, Cys206, His218, and His223.

Belongs to the SINA (Seven in absentia) family.

The catalysed reaction is S-ubiquitinyl-[E2 ubiquitin-conjugating enzyme]-L-cysteine + [acceptor protein]-L-lysine = [E2 ubiquitin-conjugating enzyme]-L-cysteine + N(6)-ubiquitinyl-[acceptor protein]-L-lysine.. Its pathway is protein modification; protein ubiquitination. Its function is as follows. E3 ubiquitin-protein ligase that mediates ubiquitination and subsequent proteasomal degradation of target proteins. E3 ubiquitin ligases accept ubiquitin from an E2 ubiquitin-conjugating enzyme in the form of a thioester and then directly transfers the ubiquitin to targeted substrates. It probably triggers the ubiquitin-mediated degradation of different substrates. This chain is E3 ubiquitin-protein ligase SINA-like 10, found in Arabidopsis thaliana (Mouse-ear cress).